Here is a 405-residue protein sequence, read N- to C-terminus: Phosphopentomutase (405 aa).

Residues Asp10, Asp303, His308, Asp344, His345, and His356 each coordinate Mn(2+).

The protein belongs to the phosphopentomutase family. The cofactor is Mn(2+).

It is found in the cytoplasm. It catalyses the reaction 2-deoxy-alpha-D-ribose 1-phosphate = 2-deoxy-D-ribose 5-phosphate. The enzyme catalyses alpha-D-ribose 1-phosphate = D-ribose 5-phosphate. The protein operates within carbohydrate degradation; 2-deoxy-D-ribose 1-phosphate degradation; D-glyceraldehyde 3-phosphate and acetaldehyde from 2-deoxy-alpha-D-ribose 1-phosphate: step 1/2. Functionally, isomerase that catalyzes the conversion of deoxy-ribose 1-phosphate (dRib-1-P) and ribose 1-phosphate (Rib-1-P) to deoxy-ribose 5-phosphate (dRib-5-P) and ribose 5-phosphate (Rib-5-P), respectively. This is Phosphopentomutase from Shewanella sediminis (strain HAW-EB3).